The chain runs to 278 residues: 4-diphosphocytidyl-2-C-methyl-D-erythritol kinase (278 aa).

The active site involves K10. 93 to 103 (PMGGGLGGGSS) lines the ATP pocket. D135 is a catalytic residue.

This sequence belongs to the GHMP kinase family. IspE subfamily.

The catalysed reaction is 4-CDP-2-C-methyl-D-erythritol + ATP = 4-CDP-2-C-methyl-D-erythritol 2-phosphate + ADP + H(+). The protein operates within isoprenoid biosynthesis; isopentenyl diphosphate biosynthesis via DXP pathway; isopentenyl diphosphate from 1-deoxy-D-xylulose 5-phosphate: step 3/6. Functionally, catalyzes the phosphorylation of the position 2 hydroxy group of 4-diphosphocytidyl-2C-methyl-D-erythritol. The sequence is that of 4-diphosphocytidyl-2-C-methyl-D-erythritol kinase from Thiobacillus denitrificans (strain ATCC 25259 / T1).